A 119-amino-acid polypeptide reads, in one-letter code: Large ribosomal subunit protein uL22 (119 aa).

Belongs to the universal ribosomal protein uL22 family. In terms of assembly, part of the 50S ribosomal subunit.

In terms of biological role, this protein binds specifically to 23S rRNA; its binding is stimulated by other ribosomal proteins, e.g. L4, L17, and L20. It is important during the early stages of 50S assembly. It makes multiple contacts with different domains of the 23S rRNA in the assembled 50S subunit and ribosome. The globular domain of the protein is located near the polypeptide exit tunnel on the outside of the subunit, while an extended beta-hairpin is found that lines the wall of the exit tunnel in the center of the 70S ribosome. This Pelodictyon phaeoclathratiforme (strain DSM 5477 / BU-1) protein is Large ribosomal subunit protein uL22.